The sequence spans 168 residues: Cytochrome c oxidase subunit 2 (168 aa).

Residues 1-3 lie on the Cytoplasmic side of the membrane; sequence MVD. The chain crosses the membrane as a helical span at residues 4 to 38; that stretch reads EHKAHKAILAYEKGWLAFSLAMLFVFIALIAYTLA. Residues 39-168 lie on the Periplasmic side of the membrane; sequence THTAGVIPAG…NMFGTIVVKE (130 aa). Residues His114, Cys149, Cys153, and His157 each coordinate Cu cation.

It belongs to the cytochrome c oxidase subunit 2 family.

The protein localises to the cell membrane. The catalysed reaction is 4 Fe(II)-[cytochrome c] + O2 + 8 H(+)(in) = 4 Fe(III)-[cytochrome c] + 2 H2O + 4 H(+)(out). Subunits I and II form the functional core of the enzyme complex. Electrons originating in cytochrome c are transferred via heme a and Cu(A) to the binuclear center formed by heme a3 and Cu(B). This chain is Cytochrome c oxidase subunit 2 (cbaB), found in Thermus thermophilus (strain ATCC 27634 / DSM 579 / HB8).